We begin with the raw amino-acid sequence, 742 residues long: Collectin-12 (742 aa).

Over 1–37 (MKDDFAEEEEVQSFGYKRFGIQEGTQCTKCKNNWALK) the chain is Cytoplasmic. A helical; Signal-anchor for type II membrane protein transmembrane segment spans residues 38 to 58 (FSIILLYILCVLLTITIAILG). Over 59-742 (YKVVEKMDNV…DMDKEQIFGV (684 aa)) the chain is Extracellular. Coiled-coil stretches lie at residues 71–101 (GLET…GQKA) and 271–334 (NNSA…QLEE). The tract at residues 439–605 (TILQGPPGPR…SEPTSVPEAN (167 aa)) is disordered. Collagen-like domains follow at residues 467-526 (GQKG…SGDP) and 527-586 (GPPG…PGPP). Positions 475-492 (PGPPGPAGEKGPPGPIGP) are enriched in pro residues. Low complexity-rich tracts occupy residues 502–522 (RGSP…LPGP) and 532–556 (QGKD…VGEP). Pro residues predominate over residues 571 to 589 (PGLPGPKGPPGPPGPPGPG). Intrachain disulfides connect C607-C618, C635-C730, and C708-C722. Residues 614–731 (YTEKCYYFSI…CEDVNNFICE (118 aa)) form the C-type lectin domain. Ca(2+)-binding residues include I644, N646, E650, D670, and E674. K691, Q694, and D696 together coordinate a carbohydrate. Ca(2+) is bound by residues Q694, D696, N697, E706, D707, N718, D719, and E731. A carbohydrate is bound at residue E706. A carbohydrate-binding residues include N718 and D719.

As to expression, widely expressed.

The protein resides in the membrane. Functionally, scavenger receptor that displays several functions associated with host defense. Binds to carbohydrates. The polypeptide is Collectin-12 (COLEC12) (Gallus gallus (Chicken)).